Reading from the N-terminus, the 572-residue chain is Sulfite reductase [NADPH] hemoprotein beta-component (572 aa).

The [4Fe-4S] cluster site is built by cysteine 437, cysteine 443, cysteine 482, and cysteine 486. Siroheme is bound at residue cysteine 486.

This sequence belongs to the nitrite and sulfite reductase 4Fe-4S domain family. Alpha(8)-beta(8). The alpha component is a flavoprotein, the beta component is a hemoprotein. It depends on siroheme as a cofactor. [4Fe-4S] cluster serves as cofactor.

The catalysed reaction is hydrogen sulfide + 3 NADP(+) + 3 H2O = sulfite + 3 NADPH + 4 H(+). It functions in the pathway sulfur metabolism; hydrogen sulfide biosynthesis; hydrogen sulfide from sulfite (NADPH route): step 1/1. Functionally, component of the sulfite reductase complex that catalyzes the 6-electron reduction of sulfite to sulfide. This is one of several activities required for the biosynthesis of L-cysteine from sulfate. This chain is Sulfite reductase [NADPH] hemoprotein beta-component, found in Staphylococcus epidermidis (strain ATCC 12228 / FDA PCI 1200).